Here is a 418-residue protein sequence, read N- to C-terminus: MYRPARVTSTSRFLNPYVVCFIVVAGVVILAVTIALLVYFLAFDQKSYFYRSSFQLLNVEYNSQLNSPATQEYRTLSGRIESLITKTFKESNLRNQFIRAHVAKLRQDGSGVRADVVMKFQFTRNNNGASMKSRIESVLRQMLNNSGNLEINPSTEITSLTDQAAANWLINECGAGPDLITLSEQRILGGTEAEEGSWPWQVSLRLNNAHHCGGSLINNMWILTAAHCFRSNSNPRDWIATSGISTTFPKLRMRVRNILIHNNYKSATHENDIALVRLENSVTFTKDIHSVCLPAATQNIPPGSTAYVTGWGAQEYAGHTVPELRQGQVRIISNDVCNAPHSYNGAILSGMLCAGVPQGGVDACQGDSGGPLVQEDSRRLWFIVGIVSWGDQCGLPDKPGVYTRVTAYLDWIRQQTGI.

Residues 1 to 20 lie on the Cytoplasmic side of the membrane; the sequence is MYRPARVTSTSRFLNPYVVC. A helical; Signal-anchor for type II membrane protein membrane pass occupies residues 21 to 41; the sequence is FIVVAGVVILAVTIALLVYFL. Residues 42–418 are Extracellular-facing; sequence AFDQKSYFYR…LDWIRQQTGI (377 aa). Residues 46-163 enclose the SEA domain; it reads KSYFYRSSFQ…STEITSLTDQ (118 aa). A glycan (N-linked (GlcNAc...) asparagine) is linked at Asn-144. Disulfide bonds link Cys-173-Cys-292, Cys-212-Cys-228, Cys-337-Cys-353, and Cys-364-Cys-393. The Peptidase S1 domain maps to 187 to 417; that stretch reads ILGGTEAEEG…YLDWIRQQTG (231 aa). Residues His-227 and Asp-272 each act as charge relay system in the active site. The active-site Charge relay system is the Ser-368.

Belongs to the peptidase S1 family. As to quaternary structure, monomer. In terms of tissue distribution, located in the cells of the submucosal serous glands of the bronchi and trachea.

It localises to the cell membrane. Its subcellular location is the secreted. With respect to regulation, strongly inhibited by diisopropyl fluorophosphate, leupeptin, antipain, aprotinin, and soybean trypsin inhibitor, but hardly inhibited by secretory leukocyte protease inhibitor at 10 microM. May play some biological role in the host defense system on the mucous membrane independently of or in cooperation with other substances in airway mucous or bronchial secretions. Plays a role in the proteolytic processing of ACE2. Proteolytically cleaves and activates the human coronavirus 229E (HCoV-229E) spike glycoprotein which facilitate virus-cell membrane fusions; spike proteins are synthesized and maintained in precursor intermediate folding states and proteolysis permits the refolding and energy release required to create stable virus-cell linkages and membrane coalescence. Preferentially cleaves the C-terminal side of arginine residues at the P1 position of certain peptides, cleaving Boc-Phe-Ser-Arg-4-methylcoumaryl-7-amide most efficiently and having an optimum pH of 8.6 with this substrate. This is Transmembrane protease serine 11D (TMPRSS11D) from Homo sapiens (Human).